Here is a 435-residue protein sequence, read N- to C-terminus: Nematode resistance protein-like HSPRO2 (435 aa).

Interacts with SNF4.

It localises to the cytoplasm. In terms of biological role, positive regulator of basal resistance. The chain is Nematode resistance protein-like HSPRO2 (HSPRO2) from Arabidopsis thaliana (Mouse-ear cress).